We begin with the raw amino-acid sequence, 537 residues long: Ceramide kinase (537 aa).

The segment at M1–W115 is essential for enzyme activity. The segment at M1–K125 is required for binding to sulfatide and phosphoinositides. The region spanning S128 to S278 is the DAGKc domain. Residues N138–F140 and T170–N174 each bind ATP. G195 to G198 is a binding site for substrate. The active-site Proton donor/acceptor is D197. Residues E202, G239–T241, R304, and R310 each bind ATP. Phosphoserine occurs at positions 340 and 408. An ATP-binding site is contributed by D502–E504.

Ca(2+) serves as cofactor. Requires Mg(2+) as cofactor. High level expression in heart, brain, skeletal muscle, kidney and liver; moderate in peripheral blood leukocytes and thymus; very low in spleen, small intestine, placenta and lung.

It localises to the cytoplasm. Its subcellular location is the cell membrane. It catalyses the reaction an N-acylsphing-4-enine + ATP = an N-acylsphing-4-enine 1-phosphate + ADP + H(+). The catalysed reaction is N-(hexanoyl)sphing-4-enine + ATP = N-hexanoylsphing-4-enine 1-phosphate + ADP + H(+). It carries out the reaction N-(acetyl)-sphing-4-enine + ATP = N-(acetyl)-sphing-4-enine-1-phosphate + ADP + H(+). The enzyme catalyses N-hexadecanoylsphing-4-enine + ATP = N-(hexadecanoyl)-sphing-4-enine-1-phosphate + ADP + H(+). It catalyses the reaction N-hexanoyl-(4R)-hydroxysphinganine + ATP = N-hexanoyl-(4R)-hydroxysphinganine-1-phosphate + ADP + H(+). Inhibited by sulfatide. Inhibited by sphinganine, sphingenine, and N,N-Dimethylsphingosine (DMS). Cardiolipin at 0.1 uM significantly increases activity, whereas at concentrations &gt;1 uM has an inhibitory effect. Catalyzes specifically the phosphorylation of ceramide to form ceramide 1-phosphate. Acts efficiently on natural and analog ceramides (C6, C8, C16 ceramides, and C8-dihydroceramide), to a lesser extent on C2-ceramide and C6-dihydroceramide, but not on other lipids, such as various sphingosines. Shows a greater preference for D-erythro isomer of ceramides. Binds phosphoinositides. In Homo sapiens (Human), this protein is Ceramide kinase (CERK).